The following is a 166-amino-acid chain: Putative peroxisomal peroxiredoxin (166 aa).

The region spanning 5-166 is the Thioredoxin domain; it reads FPEDVKFLYI…SGVDAVLAAL (162 aa). Cys-56 serves as the catalytic Cysteine sulfenic acid (-SOH) intermediate.

It belongs to the peroxiredoxin family. Prx5 subfamily. Homodimer; disulfide-linked, upon oxidation.

It catalyses the reaction a hydroperoxide + [protein]-dithiol = [protein]-disulfide + an alcohol + H2O. Functionally, thiol-specific peroxidase that catalyzes the reduction of hydrogen peroxide and organic hydroperoxides to water and alcohols, respectively. Plays a role in cell protection against oxidative stress by detoxifying peroxides and as sensor of hydrogen peroxide-mediated signaling events. The chain is Putative peroxisomal peroxiredoxin from Lipomyces kononenkoae (Yeast).